The following is a 353-amino-acid chain: C-X-C chemokine receptor type 2 (353 aa).

Residues 1 to 45 lie on the Extracellular side of the membrane; it reads FNMESDSFEDFWKGEDLSNYSYSSALPPFLLDASPCEPESLEINK. Asn-19 carries an N-linked (GlcNAc...) asparagine glycan. The helical transmembrane segment at 46–72 threads the bilayer; sequence YFVVIIYALVFLLSLLGNSLVILVILY. At 73–81 the chain is on the cytoplasmic side; sequence SRVGRSVTD. The helical transmembrane segment at 82–102 threads the bilayer; sequence VYLLNLALADLLFALTLPIWA. Topologically, residues 103–117 are extracellular; that stretch reads ASKVNGWIFGTFLCK. Cys-116 and Cys-193 form a disulfide bridge. A helical transmembrane segment spans residues 118 to 139; the sequence is VVSLLKEVNFYSGILLLACISV. Residues 140–160 lie on the Cytoplasmic side of the membrane; the sequence is DRYLAIVHATRTLTQKRYLVK. The helical transmembrane segment at 161–180 threads the bilayer; the sequence is FICLSIWGLSLLLALPVLLF. Residues 181-205 are Extracellular-facing; that stretch reads RRTIYPSNVSPVCYEDMGNNTANWR. The helical transmembrane segment at 206 to 228 threads the bilayer; the sequence is MLLRILPQSFGFIVPLLIMLFCY. The Cytoplasmic segment spans residues 229-248; sequence GFTLRTLFKAHMGQKHRAMR. A helical transmembrane segment spans residues 249–270; the sequence is VIFAVVLIFLLCWLPYNLVLLA. The Extracellular segment spans residues 271-291; that stretch reads DTLMRTQVIQETCERRNHINQ. The chain crosses the membrane as a helical span at residues 292 to 312; it reads ALDATEILGILHSCLNPLIYA. Topologically, residues 313-353 are cytoplasmic; sequence FIGQKFCHGLLKILAIHGLISKDSLPKDSRPSFVGSSSGHT.

The protein belongs to the G-protein coupled receptor 1 family. In terms of assembly, interacts with IL8. Interacts with GNAI2. In terms of processing, phosphorylated upon ligand binding; which is required for desensitization.

It is found in the cell membrane. Functionally, receptor for interleukin-8 which is a powerful neutrophil chemotactic factor. Binding of IL-8 to the receptor causes activation of neutrophils. This response is mediated via a G-protein that activates a phosphatidylinositol-calcium second messenger system. Binds to IL-8 with high affinity. Also binds with high affinity to CXCL3, GRO/MGSA and NAP-2. The sequence is that of C-X-C chemokine receptor type 2 (CXCR2) from Gorilla gorilla gorilla (Western lowland gorilla).